The sequence spans 300 residues: Ornithine carbamoyltransferase (300 aa).

Residues Ser-49–Thr-52, Gln-76, Arg-100, and His-127–Gln-130 contribute to the carbamoyl phosphate site. Residues Asn-158, Asp-218, and Ser-222–Met-223 each bind L-ornithine. Carbamoyl phosphate is bound by residues Cys-258–Leu-259 and Arg-286.

The protein belongs to the aspartate/ornithine carbamoyltransferase superfamily. OTCase family.

Its subcellular location is the cytoplasm. It carries out the reaction carbamoyl phosphate + L-ornithine = L-citrulline + phosphate + H(+). It functions in the pathway amino-acid biosynthesis; L-arginine biosynthesis; L-arginine from L-ornithine and carbamoyl phosphate: step 1/3. Reversibly catalyzes the transfer of the carbamoyl group from carbamoyl phosphate (CP) to the N(epsilon) atom of ornithine (ORN) to produce L-citrulline. The protein is Ornithine carbamoyltransferase of Oleidesulfovibrio alaskensis (strain ATCC BAA-1058 / DSM 17464 / G20) (Desulfovibrio alaskensis).